The sequence spans 425 residues: Ribulose bisphosphate carboxylase/oxygenase activase B, chloroplastic (425 aa).

The N-terminal 43 residues, 1-43 (MASAFSSTVGAPASTPTIFLGKKVKNYYHGGNKMKSRVVRVMA), are a transit peptide targeting the chloroplast. An ATP-binding site is contributed by 153 to 160 (GGKGQGKS).

Belongs to the RuBisCO activase family.

The protein localises to the plastid. Its subcellular location is the chloroplast stroma. Functionally, activation of RuBisCO (ribulose-1,5-bisphosphate carboxylase/oxygenase; EC 4.1.1.39) involves the ATP-dependent carboxylation of the epsilon-amino group of lysine leading to a carbamate structure. The chain is Ribulose bisphosphate carboxylase/oxygenase activase B, chloroplastic (RCAB) from Hordeum vulgare (Barley).